A 527-amino-acid polypeptide reads, in one-letter code: Probable feruloyl esterase B (527 aa).

An N-terminal signal peptide occupies residues 1-19 (MALLRHLLPVLTVGSAVQS). Intrachain disulfides connect cysteine 31-cysteine 76 and cysteine 65-cysteine 115. 3 N-linked (GlcNAc...) asparagine glycosylation sites follow: asparagine 56, asparagine 86, and asparagine 139. 4 disulfides stabilise this stretch: cysteine 188-cysteine 442, cysteine 257-cysteine 274, cysteine 283-cysteine 292, and cysteine 504-cysteine 526. Serine 189 acts as the Acyl-ester intermediate in catalysis. Aspartate 258, aspartate 261, alanine 263, aspartate 265, and isoleucine 267 together coordinate Ca(2+). N-linked (GlcNAc...) asparagine glycosylation is present at asparagine 277. Asparagine 312 and asparagine 356 each carry an N-linked (GlcNAc...) asparagine glycan. Residues aspartate 401 and histidine 441 each act as charge relay system in the active site.

This sequence belongs to the tannase family.

It is found in the secreted. The enzyme catalyses feruloyl-polysaccharide + H2O = ferulate + polysaccharide.. Its function is as follows. Involved in degradation of plant cell walls. Hydrolyzes the feruloyl-arabinose ester bond in arabinoxylans as well as the feruloyl-galactose and feruloyl-arabinose ester bonds in pectin. This Emericella nidulans (strain FGSC A4 / ATCC 38163 / CBS 112.46 / NRRL 194 / M139) (Aspergillus nidulans) protein is Probable feruloyl esterase B (faeB).